The chain runs to 887 residues: Phosphatidylinositol 3-kinase catalytic subunit type 3 (887 aa).

A C2 PI3K-type domain is found at 35 to 184 (YKAVLEDPML…LAKLTKAHRQ (150 aa)). Residues 149–170 (VEADGSEPTKTPGRTSSTLSED) form a disordered region. Over residues 156–170 (PTKTPGRTSSTLSED) the composition is skewed to polar residues. Residue Thr163 is modified to Phosphothreonine; by AMPK. Ser165 carries the post-translational modification Phosphoserine; by AMPK. Ser244, Ser261, and Ser282 each carry phosphoserine. Residues 283–520 (DHDLKPNAAT…PKTHEMYLNV (238 aa)) enclose the PIK helical domain. A disordered region spans residues 447-467 (TSPLPSVSSPPPASKTKEVPD). Positions 605–871 (IPETATLFKS…LIDESVHALF (267 aa)) constitute a PI3K/PI4K catalytic domain. The G-loop stretch occupies residues 611–617 (LFKSALM). A catalytic loop region spans residues 740 to 748 (GVGDRHLDN). The interval 759–780 (HIDFGYILGRDPKPLPPPMKLN) is activation loop.

Belongs to the PI3/PI4-kinase family. In terms of assembly, component of the PI3K (PI3KC3/PI3K-III/class III phosphatidylinositol 3-kinase) complex the core of which is composed of the catalytic subunit PIK3C3, the regulatory subunit PIK3R4 and BECN1 associating with additional regulatory/auxiliary subunits to form alternative complex forms. Alternative complex forms containing a fourth regulatory subunit in a mutually exclusive manner are: the PI3K complex I (PI3KC3-C1) containing ATG14, and the PI3K complex II (PI3KC3-C2) containing UVRAG. PI3KC3-C1 displays a V-shaped architecture with PIK3R4 serving as a bridge between PIK3C3 and the ATG14:BECN1 subcomplex. Both, PI3KC3-C1 and PI3KC3-C2, can associate with further regulatory subunits such as RUBCN, SH3GLB1/Bif-1 and AMBRA1. PI3KC3-C1 probably associates with PIK3CB. Interacts with RAB7A in the presence of PIK3R4. Interacts with AMBRA1. Interacts with BECN1P1/BECN2. Interacts with SLAMF1. May be a component of a complex composed of RAB5A (in GDP-bound form), DYN2 and PIK3C3. Interacts with NCKAP1L. Interacts with ATG14; this interaction is increased in the absence of TMEM39A. Interacts with STEEP1; the interaction is STING1-dependent and required for trafficking of STING1 from the endoplasmic reticulum. Interacts with YWHAG. Interacts with ARMC3. Mn(2+) serves as cofactor. Ubiquitinated via 'Lys-29'- and 'Lys-48'-linked ubiquitination by UBE3C, promoting its degradation. Deubiquitination by ZRANB1/TRABID promotes its stabilization, leading to autophagosome maturation. In terms of tissue distribution, ubiquitously expressed, with a highest expression in skeletal muscle.

It localises to the midbody. The protein resides in the late endosome. It is found in the cytoplasmic vesicle. Its subcellular location is the autophagosome. It catalyses the reaction a 1,2-diacyl-sn-glycero-3-phospho-(1D-myo-inositol) + ATP = a 1,2-diacyl-sn-glycero-3-phospho-(1D-myo-inositol-3-phosphate) + ADP + H(+). In terms of biological role, catalytic subunit of the PI3K complex that mediates formation of phosphatidylinositol 3-phosphate; different complex forms are believed to play a role in multiple membrane trafficking pathways: PI3KC3-C1 is involved in initiation of autophagosomes and PI3KC3-C2 in maturation of autophagosomes and endocytosis. As part of PI3KC3-C1, promotes endoplasmic reticulum membrane curvature formation prior to vesicle budding. Involved in regulation of degradative endocytic trafficking and required for the abscission step in cytokinesis, probably in the context of PI3KC3-C2. Involved in the transport of lysosomal enzyme precursors to lysosomes. Required for transport from early to late endosomes. Its function is as follows. (Microbial infection) Kinase activity is required for SARS coronavirus-2/SARS-CoV-2 replication. The polypeptide is Phosphatidylinositol 3-kinase catalytic subunit type 3 (Homo sapiens (Human)).